We begin with the raw amino-acid sequence, 1359 residues long: NPC1-like intracellular cholesterol transporter 1 (1359 aa).

An N-terminal signal peptide occupies residues 1–21 (MAEAGLRGWLLWALLLRLAQS). Over 22–284 (EPYTTIHQPG…TFYLGQMPGS (263 aa)) the chain is Extracellular. 9 disulfides stabilise this stretch: cysteine 33/cysteine 90, cysteine 39/cysteine 57, cysteine 78/cysteine 125, cysteine 91/cysteine 129, cysteine 113/cysteine 254, cysteine 116/cysteine 172, cysteine 189/cysteine 197, cysteine 243/cysteine 259, and cysteine 256/cysteine 263. Asparagine 54 is a glycosylation site (N-linked (GlcNAc...) asparagine). 2 N-linked (GlcNAc...) asparagine glycosylation sites follow: asparagine 132 and asparagine 138. An N-linked (GlcNAc...) asparagine glycan is attached at asparagine 244. Residues 285–305 (LVLIIILCSVFAVVTILLVGF) traverse the membrane as a helical segment. Over 306–351 (RVAPARDKSKMVDPKKGTSLSDKLSFSTHTLLGQFFQGWGTWVASW) the chain is Cytoplasmic. Residues 352-372 (PLTILVLSVIPVVALAAGLVF) form a helical membrane-spanning segment. Residues 373–632 (TELTTDPVEL…DEINRTTAED (260 aa)) are Extracellular-facing. N-linked (GlcNAc...) asparagine glycosylation is found at asparagine 416, asparagine 431, asparagine 464, asparagine 479, asparagine 497, and asparagine 506. A disulfide bridge connects residues cysteine 471 and cysteine 485. Cysteine 525 and cysteine 542 are joined by a disulfide. An N-linked (GlcNAc...) asparagine glycan is attached at asparagine 626. The 166-residue stretch at 632 to 797 (DLPIFATSYI…MSAFVALLSL (166 aa)) folds into the SSD domain. The chain crosses the membrane as a helical span at residues 633–653 (LPIFATSYIVIFLYISLALGS). Residues 654-666 (YSSWSRVMVDSKA) lie on the Cytoplasmic side of the membrane. A helical transmembrane segment spans residues 667–687 (TLGLGGVAVVLGAVMAAMGFF). Topologically, residues 688–696 (SYLGIRSSL) are extracellular. Residues 697 to 717 (VILQVVPFLVLSVGADNIFIF) traverse the membrane as a helical segment. The Cytoplasmic portion of the chain corresponds to 718-742 (VLEYQRLPRRPGEPREVHIGRALGR). Residues 743 to 763 (VAPSMLLCSLSEAICFFLGAL) traverse the membrane as a helical segment. Topologically, residues 764–776 (TPMPAVRTFALTS) are extracellular. The helical transmembrane segment at 777–797 (GLAVILDFLLQMSAFVALLSL) threads the bilayer. The Cytoplasmic segment spans residues 798–846 (DSKRQEASRLDVCCCVKPQELPPPGQGEGLLLGFFQKAYAPFLLHWITR). The helical transmembrane segment at 847-867 (GVVLLLFLALFGVSLYSMCHI) threads the bilayer. Topologically, residues 868 to 1139 (SVGLDQELAL…EQYLTILPEG (272 aa)) are extracellular. Intrachain disulfides connect cysteine 920–cysteine 925, cysteine 966–cysteine 1024, and cysteine 980–cysteine 989. Residues 1140–1160 (LFMLSLCLVPTFAVSCLLLGL) traverse the membrane as a helical segment. Residues 1161–1168 (DLRSGLLN) lie on the Cytoplasmic side of the membrane. Residues 1169-1189 (LLSIVMILVDTVGFMALWGIS) form a helical membrane-spanning segment. Residues 1190–1191 (YN) are Extracellular-facing. A helical transmembrane segment spans residues 1192 to 1212 (AVSLINLVSAVGMSVEFVSHI). Over 1213–1236 (TRSFAISTKPTWLERAKEATISMG) the chain is Cytoplasmic. Residues 1237–1257 (SAVFAGVAMTNLPGILVLGLA) form a helical membrane-spanning segment. Topologically, residues 1258–1268 (KAQLIQIFFFR) are extracellular. The helical transmembrane segment at 1269–1289 (LNLLITLLGLLHGLVFLPVIL) threads the bilayer. Residues 1290-1359 (SYVGPDVNPA…NFLPNNGRQF (70 aa)) are Cytoplasmic-facing.

The protein belongs to the patched family. In terms of assembly, interacts with RAB11A, MYO5B and RAB11FIP2. Interaction with RAB11A, MYO5B and RAB11FIP2 is required for proper transport to the plasma membrane upon cholesterol depletion. Interacts with NPC2. Interacts with LIMA1. Highly glycosylated. As to expression, widely expressed. Expressed in liver. Also expressed in small intestine, pancreas, kidney, lung, pancreas, spleen, heart, gall bladder, brain, testis, stomach and muscle.

The protein localises to the apical cell membrane. Its subcellular location is the cell membrane. It localises to the cytoplasmic vesicle membrane. The catalysed reaction is cholesterol(in) = cholesterol(out). It catalyses the reaction sitosterol(out) = sitosterol(in). In terms of biological role, plays a major role in cholesterol homeostasis. Critical for the uptake of cholesterol across the plasma membrane of the intestinal enterocyte. Involved in plant sterol absorption, it transports sitosterol, although at lower rates than cholesterol. Is the direct molecular target of ezetimibe, a drug that inhibits cholesterol absorption and is approved for the treatment of hypercholesterolemia. May have a function in the transport of multiple lipids and their homeostasis, thereby influencing lipid metabolism regulation. May be involved in caveolin trafficking from the plasma membrane. In addition, acts as a negative regulator of NPC2 and down-regulates its expression and secretion by inhibiting its maturation and accelerating its degradation. This is NPC1-like intracellular cholesterol transporter 1 from Homo sapiens (Human).